The primary structure comprises 209 residues: Large ribosomal subunit protein uL3 (209 aa).

The tract at residues 127–153 is disordered; that stretch reads NASRGPMSHGSKFHRAPGSMGAASDPS.

It belongs to the universal ribosomal protein uL3 family. In terms of assembly, part of the 50S ribosomal subunit. Forms a cluster with proteins L14 and L19.

Functionally, one of the primary rRNA binding proteins, it binds directly near the 3'-end of the 23S rRNA, where it nucleates assembly of the 50S subunit. This chain is Large ribosomal subunit protein uL3, found in Clostridium perfringens (strain SM101 / Type A).